The following is a 394-amino-acid chain: Elongation factor Tu (394 aa).

The tr-type G domain maps to 10-204 (KPHINVGTIG…YLDTYIPEPK (195 aa)). The tract at residues 19-26 (GHVDHGKT) is G1. 19 to 26 (GHVDHGKT) serves as a coordination point for GTP. Thr26 lines the Mg(2+) pocket. The segment at 60–64 (GITIN) is G2. A G3 region spans residues 81–84 (DCPG). Residues 81–85 (DCPGH) and 136–139 (NKCD) each bind GTP. The interval 136–139 (NKCD) is G4. The G5 stretch occupies residues 174 to 176 (SAL).

The protein belongs to the TRAFAC class translation factor GTPase superfamily. Classic translation factor GTPase family. EF-Tu/EF-1A subfamily. As to quaternary structure, monomer.

The protein localises to the cytoplasm. The catalysed reaction is GTP + H2O = GDP + phosphate + H(+). Functionally, GTP hydrolase that promotes the GTP-dependent binding of aminoacyl-tRNA to the A-site of ribosomes during protein biosynthesis. The chain is Elongation factor Tu from Buchnera aphidicola subsp. Baizongia pistaciae (strain Bp).